Here is a 334-residue protein sequence, read N- to C-terminus: TPR repeat-containing protein YsoA (334 aa).

TPR repeat units lie at residues 17-50, 52-84, and 195-230; these read KDRLVEKGMSSLKEKKYQEALELFSEAMKYDDTE, DLHLGMAICFLELGELEEAESVCEKMLKEGYGH, and HPIIKTMIVMLLAEHEYSKPVHISKFGESLTIEPSE.

The chain is TPR repeat-containing protein YsoA (ysoA) from Bacillus subtilis (strain 168).